The chain runs to 335 residues: Serpentine receptor class gamma-11 (335 aa).

Transmembrane regions (helical) follow at residues 33–53 (FLQIAYLIPGGILNILLLYTI), 66–86 (FFLIYSTDCFVSFSMIFLDII), 98–118 (PIIAPMFYEPLIGFKIMMIVL), 154–174 (LKYLIILVFVIPFSIDWNLII), 202–222 (FQLIFITIALLFTIVCTSVIF), 242–262 (GTAYISMSFIILVVFQFLFAF), and 271–291 (TIFGYSLLSYDILNVGSPIIM).

This sequence belongs to the nematode receptor-like protein srg family.

The protein localises to the membrane. This chain is Serpentine receptor class gamma-11 (srg-11), found in Caenorhabditis elegans.